The following is a 243-amino-acid chain: Probable enoyl-CoA hydratase echA6 (243 aa).

This sequence belongs to the enoyl-CoA hydratase/isomerase family.

The catalysed reaction is a (3S)-3-hydroxyacyl-CoA = a (2E)-enoyl-CoA + H2O. The enzyme catalyses a 4-saturated-(3S)-3-hydroxyacyl-CoA = a (3E)-enoyl-CoA + H2O. In terms of biological role, could possibly oxidize fatty acids using specific components. The polypeptide is Probable enoyl-CoA hydratase echA6 (echA6) (Mycobacterium bovis (strain ATCC BAA-935 / AF2122/97)).